The primary structure comprises 924 residues: DNA polymerase (924 aa).

The 152-residue stretch at 235–386 folds into the 3'-5' exonuclease domain; the sequence is YPMSQQPKIV…DDCDVTFRLS (152 aa).

It belongs to the DNA polymerase type-A family.

It carries out the reaction DNA(n) + a 2'-deoxyribonucleoside 5'-triphosphate = DNA(n+1) + diphosphate. Functionally, replicates viral genomic DNA. This polymerase possesses two enzymatic activities: DNA synthesis (polymerase) and an exonucleolytic activity that degrades single-stranded DNA in the 3'-5' direction. The protein is DNA polymerase (31) of Bacillus phage SP01 (Bacteriophage SP01).